A 185-amino-acid chain; its full sequence is Large ribosomal subunit protein uL6 (185 aa).

It belongs to the universal ribosomal protein uL6 family. In terms of assembly, part of the 50S ribosomal subunit.

Functionally, this protein binds to the 23S rRNA, and is important in its secondary structure. It is located near the subunit interface in the base of the L7/L12 stalk, and near the tRNA binding site of the peptidyltransferase center. The sequence is that of Large ribosomal subunit protein uL6 from Staphylothermus marinus (strain ATCC 43588 / DSM 3639 / JCM 9404 / F1).